The sequence spans 440 residues: Thymidine phosphorylase (440 aa).

It belongs to the thymidine/pyrimidine-nucleoside phosphorylase family. Homodimer.

The enzyme catalyses thymidine + phosphate = 2-deoxy-alpha-D-ribose 1-phosphate + thymine. Its pathway is pyrimidine metabolism; dTMP biosynthesis via salvage pathway; dTMP from thymine: step 1/2. The enzymes which catalyze the reversible phosphorolysis of pyrimidine nucleosides are involved in the degradation of these compounds and in their utilization as carbon and energy sources, or in the rescue of pyrimidine bases for nucleotide synthesis. The chain is Thymidine phosphorylase from Salmonella agona (strain SL483).